We begin with the raw amino-acid sequence, 324 residues long: o-succinylbenzoate synthase (324 aa).

Lys-135 functions as the Proton donor in the catalytic mechanism. Positions 163, 192, and 215 each coordinate Mg(2+). Lys-237 acts as the Proton acceptor in catalysis.

Belongs to the mandelate racemase/muconate lactonizing enzyme family. MenC type 1 subfamily. A divalent metal cation is required as a cofactor.

It carries out the reaction (1R,6R)-6-hydroxy-2-succinyl-cyclohexa-2,4-diene-1-carboxylate = 2-succinylbenzoate + H2O. It functions in the pathway quinol/quinone metabolism; 1,4-dihydroxy-2-naphthoate biosynthesis; 1,4-dihydroxy-2-naphthoate from chorismate: step 4/7. The protein operates within quinol/quinone metabolism; menaquinone biosynthesis. Converts 2-succinyl-6-hydroxy-2,4-cyclohexadiene-1-carboxylate (SHCHC) to 2-succinylbenzoate (OSB). The sequence is that of o-succinylbenzoate synthase from Aliivibrio salmonicida (strain LFI1238) (Vibrio salmonicida (strain LFI1238)).